Here is a 290-residue protein sequence, read N- to C-terminus: Acetyl-coenzyme A carboxylase carboxyl transferase subunit beta (290 aa).

The region spanning 27-290 is the CoA carboxyltransferase N-terminal domain; that stretch reads LWVKCPSCEA…LQRQPADALA (264 aa). 4 residues coordinate Zn(2+): C31, C34, C50, and C53. The C4-type zinc finger occupies 31 to 53; it reads CPSCEAVLYRNDVDANLHVCPKC.

This sequence belongs to the AccD/PCCB family. As to quaternary structure, acetyl-CoA carboxylase is a heterohexamer composed of biotin carboxyl carrier protein (AccB), biotin carboxylase (AccC) and two subunits each of ACCase subunit alpha (AccA) and ACCase subunit beta (AccD). Zn(2+) is required as a cofactor.

The protein resides in the cytoplasm. It carries out the reaction N(6)-carboxybiotinyl-L-lysyl-[protein] + acetyl-CoA = N(6)-biotinyl-L-lysyl-[protein] + malonyl-CoA. The protein operates within lipid metabolism; malonyl-CoA biosynthesis; malonyl-CoA from acetyl-CoA: step 1/1. In terms of biological role, component of the acetyl coenzyme A carboxylase (ACC) complex. Biotin carboxylase (BC) catalyzes the carboxylation of biotin on its carrier protein (BCCP) and then the CO(2) group is transferred by the transcarboxylase to acetyl-CoA to form malonyl-CoA. In Burkholderia cenocepacia (strain ATCC BAA-245 / DSM 16553 / LMG 16656 / NCTC 13227 / J2315 / CF5610) (Burkholderia cepacia (strain J2315)), this protein is Acetyl-coenzyme A carboxylase carboxyl transferase subunit beta.